Here is a 227-residue protein sequence, read N- to C-terminus: Endo-1,4-beta-xylanase 2 (227 aa).

Residues 1–36 form the signal peptide; it reads MVSIKSVLAAATAVSSALAAPFDFVPRDNSTALQAR. Asparagine 29 carries N-linked (GlcNAc...) asparagine glycosylation. In terms of domain architecture, GH11 spans 37–225; the sequence is QVTPNAEGWH…SSGESDIYVQ (189 aa). Glutamate 121 acts as the Nucleophile in catalysis. The Proton donor role is filled by glutamate 212.

It belongs to the glycosyl hydrolase 11 (cellulase G) family.

Its subcellular location is the secreted. The enzyme catalyses Endohydrolysis of (1-&gt;4)-beta-D-xylosidic linkages in xylans.. It functions in the pathway glycan degradation; xylan degradation. Endo-1,4-beta-xylanase involved in the hydrolysis of xylan, a major structural heterogeneous polysaccharide found in plant biomass representing the second most abundant polysaccharide in the biosphere, after cellulose. This Humicola insolens (Soft-rot fungus) protein is Endo-1,4-beta-xylanase 2 (xyn2).